Reading from the N-terminus, the 281-residue chain is Nucleotide-binding protein Patl_0571 (281 aa).

8–15 (GRSGSGKS) lines the ATP pocket. 56–59 (DVRN) is a binding site for GTP.

This sequence belongs to the RapZ-like family.

Functionally, displays ATPase and GTPase activities. The polypeptide is Nucleotide-binding protein Patl_0571 (Pseudoalteromonas atlantica (strain T6c / ATCC BAA-1087)).